The primary structure comprises 754 residues: Condensin complex subunit 2 (754 aa).

Positions 104-149 (LAQRKTNGASNGDDSNGGNGEGLGGDSDEANIEIDPLTGMPISNDP) are disordered. Over residues 118–128 (SNGGNGEGLGG) the composition is skewed to gly residues. Residue Ser-245 is modified to Phosphoserine. Residues 359–379 (CYPDENHDNTSHDEQDDDNVN) are disordered. Positions 362 to 371 (DENHDNTSHD) are enriched in basic and acidic residues. The residue at position 548 (Ser-548) is a Phosphoserine. The segment at 665-688 (HDSRKNREQSSNDSETHTEDESTK) is disordered.

The protein belongs to the CND2 (condensin subunit 2) family. As to quaternary structure, component of the condensin complex, which contains the SMC2 and SMC4 heterodimer, and three non SMC subunits that probably regulate the complex: BRN1, YCS4 and YCG1/YCS5.

The protein resides in the nucleus. Its subcellular location is the cytoplasm. It is found in the chromosome. Regulatory subunit of the condensin complex, a complex required for conversion of interphase chromatin into mitotic-like condense chromosomes. The condensin complex probably introduces positive supercoils into relaxed DNA in the presence of type I topoisomerases and converts nicked DNA into positive knotted forms in the presence of type II topoisomerases. The condensin complex probably also plays a role during interphase. In Saccharomyces cerevisiae (strain ATCC 204508 / S288c) (Baker's yeast), this protein is Condensin complex subunit 2 (BRN1).